The chain runs to 1483 residues: MRYLSAEHDDFEKSRIFKSVLTVGAGVAPNTNSCATFKAKSVKNSVERMHTMQRDEIRDEAARHAACPRYTDMNVLNIVRDFDQGAFGGPVDDNLDIFEAEVPEAGRRAAGTAAPRDNTAVPELELMRAMHRASLNDRPPAAGSAQRGSAGSRQPRDNLTPTAADTTGAQASVDLISRPIYQTEQPRPPASNVQQQAAAAALRRQQQPPPGVRRPRSRQARQQQPQQPARPPQTTETQTSNNSNTNNTTATRQVFEQQGPSTIQGRPPTETEILNELFNCHAEIPPLEHVTGHDGYTITTPLFTSVPYQNQTRRSRPQGDNEVPPPTEGDLRPVIPRIPYESETGTETQDDTATGGEITTLVAPSQSDRIQLQIPRSIRNLTRRRAAAAAASQTGSADTPIVTPQPEQTAVPPVLRPPVFRAPSGQSSVSQQQPIQTSNVITTDTTTGTSAPSGDNDSRRAWSPPPWVRRESSSNEPSRQSQSVIEPDEQRYANLPPPPDWLFKRHGVPPRPLRVLTSIDDMSSGCDDTMTQSGTTSSTTRQPPPPNPFAPSRRPQSSGGRCRPPQNGSQGPQHSDDDDSPYPLGSRRQPVPYGTGSVTTTQPSGQLPSDDRGRPAPERRQQPTSRQTVAQTNIIPNTSGGADDDNTPPDRNRLTTFLDEMKRTNWETVEEYLNAIEEDRQRRETEAEHTNLLLPESHTGVTPQRSNNPFMPQVDLDTIPTQDRQETQRQRPSPKPKPKSLREYRRRDPLTGMGRSYTDGSTTSDGDSSDNSWSDESRRPRRRVGSTLVRPPRSHSAEDASGAGGKIKGTARKSPHSSRAPAQQGAGTADLTELAGMASLNLKSPSPRTKLTRSSSLKSPGTTTRDTQQTSHPLTRSASLSSKSSNPFMPRPPDSGGSSDGNTGSSQTSVSTLGINAQQCKFRVPNAHKMFTMVNGKPRLPRMRSAWYSSDDGGESGLECLRTPAPTRKTGGRGGSKITVDVKKIMATAKGSQQAKKCLDKIIKHAGEAERYALQQPSPEPPAGSISARAAPPPKPRTGTRSASQDRSNTRETVPVATDLIDISSAPSSLTQQVSTSASQTTCDGIQLFSVAPPGGSTSQSVQKPSSIPLQPIVTGPSTMTSQSVTDHDGSSVTKKPVISQGTFKHTSQSQPSSEQPAPGEPQPDDQLRDFIAELEGTDVPAPPVPEQPQSTVTNTQTQDVLPSQGSSKTTQQTTSSTQKSSKTGSAPTSGPKSALSKTKSSTSDTASGKSVTRKGSAASSTDPTTKPTRKVSINATEPKKGSKSSTKQSTKTSTQPSDKNNILLNAKVVTIDGDRINIADSNISVFAPTQPTATATQPVTSESTPALPPQLSIPQGQQSVTNIFAPIVPPTNTLSAQATSCTQPLEQRVSLNQPDNPPRRRVVSSFAEQIRNLEVDELKILRQQVRERIANERQQQDSPMDVDRRLALDTLEDMLVSEESAAPTPLPMDTGRFTPKSDVDMS.

Disordered stretches follow at residues 135 to 268, 306 to 334, 383 to 506, 518 to 653, 680 to 911, 949 to 976, 1013 to 1061, and 1089 to 1299; these read LNDR…GRPP, VPYQ…LRPV, RRRA…FKRH, SIDD…DRNR, RQRR…TSVS, SSDD…RGGS, ALQQ…TDLI, and FSVA…QPSD. The span at 141–153 shows a compositional bias: low complexity; the sequence is AAGSAQRGSAGSR. Residues 157–170 show a composition bias toward polar residues; the sequence is DNLTPTAADTTGAQ. Composition is skewed to low complexity over residues 190 to 206 and 220 to 251; these read ASNV…RRQQ and ARQQ…TTAT. Residues 252–264 show a composition bias toward polar residues; it reads RQVFEQQGPSTIQ. 3 stretches are compositionally biased toward low complexity: residues 424–449, 474–483, and 529–541; these read SGQS…TTGT, SNEPSRQSQS, and TMTQ…STTR. Residues 596-607 show a composition bias toward polar residues; sequence GSVTTTQPSGQL. Residues 609-621 are compositionally biased toward basic and acidic residues; that stretch reads SDDRGRPAPERRQ. Polar residues predominate over residues 622–640; it reads QPTSRQTVAQTNIIPNTSG. Over residues 680–689 the composition is skewed to basic and acidic residues; sequence RQRRETEAEH. The segment covering 699 to 710 has biased composition (polar residues); it reads TGVTPQRSNNPF. Residues 740–749 are compositionally biased toward basic and acidic residues; the sequence is SLREYRRRDP. Low complexity predominate over residues 754–774; sequence GRSYTDGSTTSDGDSSDNSWS. Over residues 841–876 the composition is skewed to polar residues; the sequence is NLKSPSPRTKLTRSSSLKSPGTTTRDTQQTSHPLTR. The span at 894 to 909 shows a compositional bias: low complexity; the sequence is DSGGSSDGNTGSSQTS. Composition is skewed to polar residues over residues 1096–1109 and 1116–1125; these read GSTS…SSIP and GPSTMTSQSV. Over residues 1148–1158 the composition is skewed to low complexity; that stretch reads SQSQPSSEQPA. The segment covering 1188 to 1202 has biased composition (polar residues); sequence QPQSTVTNTQTQDVL. Low complexity-rich tracts occupy residues 1204 to 1226 and 1233 to 1251; these read SQGS…KTGS and KSAL…SGKS. Residues 1258–1276 show a composition bias toward polar residues; that stretch reads AASSTDPTTKPTRKVSINA. Positions 1284 to 1299 are enriched in low complexity; it reads KSSTKQSTKTSTQPSD. Residues 1408-1438 are a coiled coil; it reads AEQIRNLEVDELKILRQQVRERIANERQQQD. The interval 1454-1483 is disordered; the sequence is DMLVSEESAAPTPLPMDTGRFTPKSDVDMS.

The chain is Protein ORF C from Elephantid herpesvirus 1 (isolate Asian elephant/Berlin/Kiba/1998) (EIHV-1).